Here is a 353-residue protein sequence, read N- to C-terminus: Ferredoxin--NADP reductase (353 aa).

Positions 25, 44, 52, 57, 97, 132, 298, and 339 each coordinate FAD.

It belongs to the ferredoxin--NADP reductase type 2 family. Homodimer. The cofactor is FAD.

The enzyme catalyses 2 reduced [2Fe-2S]-[ferredoxin] + NADP(+) + H(+) = 2 oxidized [2Fe-2S]-[ferredoxin] + NADPH. The polypeptide is Ferredoxin--NADP reductase (Chlorobium chlorochromatii (strain CaD3)).